The following is a 3259-amino-acid chain: Striated muscle-specific serine/threonine-protein kinase (3259 aa).

The segment at 1-30 (MQKARGTRGEDAGTRAPPSPGVPPKRAKVG) is disordered. Arg33 carries the post-translational modification Omega-N-methylarginine. The Ig-like 1 domain maps to 45–126 (PVFLRPLKNA…GKASCEAVLT (82 aa)). Ser141 carries the post-translational modification Phosphoserine. Disordered regions lie at residues 155-185 (RAFS…TSEE), 198-226 (EQEA…GPRH), 278-716 (PSGL…DDSY), and 816-880 (VRPG…KVSL). Over residues 158–185 (STPTGGSDTLVGTSLDTPPTSVTGTSEE) the composition is skewed to polar residues. Residues 301 to 317 (PALPPPSKSALLPPPSP) are compositionally biased toward pro residues. 2 positions are modified to phosphoserine: Ser368 and Ser375. Thr379 is modified (phosphothreonine). Ser382 and Ser385 each carry phosphoserine. Basic and acidic residues predominate over residues 404–422 (ILDKLQFFEERRRSLERSD). Ser423 is modified (phosphoserine). At Thr453 the chain carries Phosphothreonine. Phosphoserine occurs at positions 457, 463, 493, 511, 531, and 554. Residues 459–473 (EELRSPRGSVAERRR) are compositionally biased toward basic and acidic residues. Basic and acidic residues predominate over residues 510–522 (TSREELVRSHESL). Composition is skewed to basic and acidic residues over residues 624-638 (PESR…KREP) and 663-680 (EKNR…RGPE). The 91-residue stretch at 727–817 (PVFEIPLQNM…ASCASSLAVR (91 aa)) folds into the Ig-like 2 domain. Polar residues predominate over residues 820–830 (ASTSPFSSPIT). 3 consecutive Ig-like domains span residues 874–963 (PTFK…ARLE), 968–1056 (PESR…DELT), and 1069–1157 (PLFT…AQLY). Residues Cys994 and Cys1046 are joined by a disulfide bond. Residues Ser1133 and Ser1177 each carry the phosphoserine modification. Residues 1162 to 1185 (RTAASGPSSKLEKMPSIPEEPEHG) are disordered. Residues 1193–1283 (PDFLRPLQDL…AACYAHLYVT (91 aa)) form the Ig-like 6 domain. The region spanning 1290–1387 (PDGAPQVVAV…PSEPVQLLEH (98 aa)) is the Fibronectin type-III 1 domain. Over residues 1367–1379 (SSGKSSSKPSAPS) the composition is skewed to low complexity. Positions 1367–1386 (SSGKSSSKPSAPSEPVQLLE) are disordered. Positions 1490 to 1578 (PRFESIMEDV…GEVSCKAELS (89 aa)) constitute an Ig-like 7 domain. A Protein kinase 1 domain is found at 1606–1859 (YDIHQEIGRG…AEETLEHPWF (254 aa)). ATP-binding positions include 1612 to 1620 (IGRGAFSYL) and Lys1635. Asp1724 functions as the Proton acceptor in the catalytic mechanism. Disordered stretches follow at residues 1913-2244 (MPRR…QMPA), 2336-2451 (AKFK…SPVL), and 2463-2562 (RLSS…SQPN). The segment covering 1918–1927 (PPSGGLSSSS) has biased composition (low complexity). Phosphoserine is present on residues Ser1993, Ser2004, Ser2019, Ser2020, and Ser2042. The span at 2009–2019 (SPRRPELRRGS) shows a compositional bias: basic and acidic residues. Arg2060 carries the post-translational modification Asymmetric dimethylarginine; alternate. Arg2060 carries the post-translational modification Omega-N-methylarginine; alternate. A compositionally biased stretch (low complexity) spans 2069-2081 (AQRLQALRQRLLR). A phosphoserine mark is found at Ser2114 and Ser2135. An Omega-N-methylarginine modification is found at Arg2144. The segment covering 2168 to 2179 (ESPSLSALSETQ) has biased composition (polar residues). A compositionally biased stretch (pro residues) spans 2180–2189 (PPSPALPSAP). A phosphoserine mark is found at Ser2182 and Ser2207. The span at 2193 to 2207 (ITKSPEPSAATSRDS) shows a compositional bias: polar residues. The span at 2208 to 2218 (PQPPAPQPVPE) shows a compositional bias: pro residues. Over residues 2219–2229 (KIPEPKPEPVR) the composition is skewed to basic and acidic residues. Over residues 2230–2244 (AAKPAQPPLALQMPA) the composition is skewed to low complexity. Over residues 2336–2345 (AKFKRSRESP) the composition is skewed to basic and acidic residues. Over residues 2346 to 2355 (LSRGLRLLSR) the composition is skewed to low complexity. Basic and acidic residues predominate over residues 2356–2372 (SRSEERGPFRGAEDDGI). A Phosphoserine modification is found at Ser2376. Thr2380 bears the Phosphothreonine mark. A compositionally biased stretch (basic and acidic residues) spans 2384–2395 (LVRRPERSRSVQ). A phosphoserine mark is found at Ser2410, Ser2414, Ser2438, Ser2439, Ser2444, and Ser2448. Residues 2463-2484 (RLSSRLQRSGSSEDSGGASGRS) show a composition bias toward low complexity. Positions 2510–2520 (QLASQTGATTP) are enriched in polar residues. Residues Ser2521 and Ser2524 each carry the phosphoserine modification. Residues 2521–2540 (SAESLGSEASGTSGSSAPGE) are compositionally biased toward low complexity. Basic residues predominate over residues 2543-2554 (SRHRWGLSRLRK). Ser2559 is modified (phosphoserine). Residues 2583 to 2673 (PPVFHIKLKD…GSITSSCTVA (91 aa)) form the Ig-like 8 domain. An intrachain disulfide couples Cys2605 to Cys2657. One can recognise a Fibronectin type-III 2 domain in the interval 2680 to 2774 (KLAPPEVPQT…KVFIRGTQDS (95 aa)). Thr2771 carries the post-translational modification Phosphothreonine. Disordered stretches follow at residues 2771 to 2829 (TQDS…MSAN) and 2855 to 2957 (TQQA…PQKP). A Phosphoserine modification is found at Ser2774. Pro residues predominate over residues 2793–2810 (RAPPPDSPTSLVPTPPLA). Positions 2814–2828 (SQASTLSPSTSSMSA) are enriched in low complexity. Residues 2859–2965 (EPSPPSILVT…KPYTFLEEKA (107 aa)) enclose the Fibronectin type-III 3 domain. Residues 2880–2907 (GTLTPTSSPQGVKPAPSSSSLYMVTSFV) are compositionally biased toward polar residues. Positions 2910-2924 (PPDPQPPAPEPPPEP) are enriched in pro residues. The segment covering 2940–2950 (SSPTPESTTLR) has biased composition (polar residues). Residue Ser2941 is modified to Phosphoserine. The Protein kinase 2 domain occupies 2958–3210 (YTFLEEKARG…LQDCLAHPWL (253 aa)). ATP-binding positions include 2964 to 2972 (KARGRFGVV) and Lys2987. The active-site Proton acceptor is Asp3077.

Belongs to the protein kinase superfamily. CAMK Ser/Thr protein kinase family. As to quaternary structure, interacts with MTM1. Post-translationally, may be autophosphorylated. As to expression, isoform 2 is highly expressed in differentiated arterial smooth muscle cells (ASMC) in the medial layer of the aorta. Weakly detected in brain and testis and to a lesser extent in organs rich in striated muscle or visceral smooth muscle.

It is found in the nucleus. It carries out the reaction L-seryl-[protein] + ATP = O-phospho-L-seryl-[protein] + ADP + H(+). It catalyses the reaction L-threonyl-[protein] + ATP = O-phospho-L-threonyl-[protein] + ADP + H(+). Functionally, isoform 2 may have a role in regulating the growth and differentiation of arterial smooth muscle cells. This chain is Striated muscle-specific serine/threonine-protein kinase (Speg), found in Rattus norvegicus (Rat).